Consider the following 302-residue polypeptide: Cyclin-dependent kinase 1-B (302 aa).

Residues 4-287 (YTKIEKIGEG…ARKAMLHPYF (284 aa)) form the Protein kinase domain. ATP-binding positions include 10–18 (IGEGTYGVV) and lysine 33. Threonine 14 carries the post-translational modification Phosphothreonine. Tyrosine 15 is subject to Phosphotyrosine; by wee1 and wee2. Residue aspartate 128 is the Proton acceptor of the active site. Threonine 161 carries the post-translational modification Phosphothreonine; by cak. Serine 277 carries the phosphoserine modification.

This sequence belongs to the protein kinase superfamily. CMGC Ser/Thr protein kinase family. CDC2/CDKX subfamily. Forms a stable but non-covalent complex with a regulatory subunit and with a cyclin. Interacts with spdya. Post-translationally, phosphorylation at Tyr-15 by wee1 and wee2 inhibits the protein kinase activity and acts negative regulator of entry into mitosis (G2 to M transition).

The protein localises to the nucleus. It carries out the reaction L-seryl-[protein] + ATP = O-phospho-L-seryl-[protein] + ADP + H(+). It catalyses the reaction L-threonyl-[protein] + ATP = O-phospho-L-threonyl-[protein] + ADP + H(+). The catalysed reaction is [DNA-directed RNA polymerase] + ATP = phospho-[DNA-directed RNA polymerase] + ADP + H(+). With respect to regulation, phosphorylation at Thr-14 or Tyr-15 inactivates the enzyme, while phosphorylation at Thr-161 activates it. Plays a key role in the control of the eukaryotic cell cycle by modulating the centrosome cycle as well as mitotic onset; promotes G2-M transition via association with multiple interphase cyclins. During G2 and early mitosis, CDC25A/B/C-mediated dephosphorylation activates CDK1/cyclin complexes which phosphorylate several substrates that trigger at least centrosome separation, Golgi dynamics, nuclear envelope breakdown and chromosome condensation. Once chromosomes are condensed and aligned at the metaphase plate, CDK1 activity is switched off by WEE1- and PKMYT1-mediated phosphorylation to allow sister chromatid separation, chromosome decondensation, reformation of the nuclear envelope and cytokinesis. Catalyzes lamin (LMNA, LMNB1 and LMNB2) phosphorylation at the onset of mitosis, promoting nuclear envelope breakdown. The chain is Cyclin-dependent kinase 1-B (cdk1-b) from Xenopus laevis (African clawed frog).